The chain runs to 86 residues: Anti-adapter protein IraP (86 aa).

Residues 1 to 36 (MKNLIAELLVKLAEKEEESKELVAQVEALEIVVTAL) are a coiled coil.

The protein belongs to the IraP family. In terms of assembly, interacts with RssB.

Its subcellular location is the cytoplasm. Inhibits RpoS proteolysis by regulating RssB activity, thereby increasing the stability of the sigma stress factor RpoS especially during phosphate starvation, but also in stationary phase and during nitrogen starvation. Its effect on RpoS stability is due to its interaction with RssB, which probably blocks the interaction of RssB with RpoS, and the consequent delivery of the RssB-RpoS complex to the ClpXP protein degradation pathway. The chain is Anti-adapter protein IraP from Cronobacter sakazakii (strain ATCC BAA-894) (Enterobacter sakazakii).